A 386-amino-acid chain; its full sequence is Endonuclease III homolog 2, chloroplastic (386 aa).

The N-terminal 50 residues, methionine 1–glutamate 50, are a transit peptide targeting the chloroplast. The tract at residues arginine 44 to lysine 66 is disordered. The HhH domain occupies tyrosine 252 to leucine 278. The Nucleophile; for N-glycosylase activity role is filled by lysine 272. 4 residues coordinate [4Fe-4S] cluster: cysteine 347, cysteine 354, cysteine 357, and cysteine 363.

The protein belongs to the Nth/MutY family. [4Fe-4S] cluster is required as a cofactor.

It localises to the plastid. Its subcellular location is the chloroplast stroma. The protein resides in the chloroplast nucleoid. The enzyme catalyses 2'-deoxyribonucleotide-(2'-deoxyribose 5'-phosphate)-2'-deoxyribonucleotide-DNA = a 3'-end 2'-deoxyribonucleotide-(2,3-dehydro-2,3-deoxyribose 5'-phosphate)-DNA + a 5'-end 5'-phospho-2'-deoxyribonucleoside-DNA + H(+). Bifunctional DNA N-glycosylase with associated apurinic/apyrimidinic (AP) lyase function that catalyzes the first step in base excision repair (BER), the primary repair pathway for the repair of oxidative DNA damage. The DNA N-glycosylase activity releases the damaged DNA base from DNA by cleaving the N-glycosidic bond, leaving an AP site. The AP lyase activity cleaves the phosphodiester bond 3' to the AP site by a beta-elimination. Primarily recognizes and repairs oxidative base damage of pyrimidines. This is Endonuclease III homolog 2, chloroplastic (NTH2) from Arabidopsis thaliana (Mouse-ear cress).